Consider the following 1290-residue polypeptide: 1-phosphatidylinositol 4,5-bisphosphate phosphodiesterase gamma-1 (1290 aa).

Ala-2 is subject to N-acetylalanine. One can recognise a PH 1 domain in the interval 27–142 (RSLEVGTVMT…WIKGLTWLME (116 aa)). The region spanning 152–187 (QIERWLRKQFYSVDRNREDRISAKDLKNMLSQVNYR) is the EF-hand domain. Ca(2+)-binding residues include Asp-165, Asn-167, Glu-169, Arg-171, and Asp-176. The PI-PLC X-box domain occupies 320–464 (DTMNNPLSHY…LKRKILIKHK (145 aa)). Residues His-335 and His-380 contribute to the active site. The region spanning 489 to 523 (SIKNGILYLEDPVNHEWYPHYFVLTSSKIYYSEET) is the PH 2; first part domain. Tyr-506 carries the phosphotyrosine modification. The tract at residues 522–544 (ETSSDQGNEDEEEPKEVSSSTEL) is disordered. 2 SH2 domains span residues 550-657 (WFHG…SEPV) and 668-756 (WYHA…RYPI). Tyr-771 carries the post-translational modification Phosphotyrosine; by SYK. Residue Tyr-775 is modified to Phosphotyrosine. Tyr-783 carries the post-translational modification Phosphotyrosine; by ITK, SYK and TXK. The 61-residue stretch at 791–851 (TFKCAVKALF…PSNYVEEMVN (61 aa)) folds into the SH3 domain. The 37-residue stretch at 895-931 (FVFSISMASVAHWSLDVAADSQEELQDWVKKIREVAQ) folds into the PH 2; second part domain. The PI-PLC Y-box domain maps to 953–1070 (LSELVVYCRP…GYVLQPSTMR (118 aa)). At Tyr-977 the chain carries Phosphotyrosine. A C2 domain is found at 1071–1194 (DEAFDPFDKS…TGYRAVPLKN (124 aa)). Phosphoserine is present on residues Ser-1221, Pro-1222, Ser-1227, Ser-1233, and Ser-1248. Tyr-1253 is modified (phosphotyrosine). Ser-1263 bears the Phosphoserine mark. A disordered region spans residues 1271-1290 (FDSRERRAPRRTRVNGDNRL).

In terms of assembly, interacts with AGAP2 via its SH3 domain. Interacts (via SH2 domain) with RET. Interacts with FLT1 (tyrosine-phosphorylated). Interacts (via SH2 domain) with FGFR1, FGFR2, FGFR3 and FGFR4 (phosphorylated). Interacts with LAT (phosphorylated) upon TCR activation. Interacts (via SH3 domain) with the Pro-rich domain of TNK1. Associates with BLNK, VAV1, GRB2 and NCK1 in a B-cell antigen receptor-dependent fashion. Interacts with CBLB in activated T-cells; which inhibits phosphorylation. Interacts with SHB. Interacts (via SH3 domain) with the Arg/Gly-rich-flanked Pro-rich domains of KHDRBS1/SAM68. This interaction is selectively regulated by arginine methylation of KHDRBS1/SAM68. Interacts with INPP5D/SHIP1, THEMIS and CLNK. Interacts with AXL, FLT4 and KIT. Interacts with RALGPS1. Interacts (via the SH2 domains) with VIL1 (phosphorylated at C-terminus tyrosine phosphorylation sites). Interacts (via SH2 domain) with PDGFRA and PDGFRB (tyrosine phosphorylated). Interacts with PIP5K1C. Interacts with NTRK1 and NTRK2 (phosphorylated upon ligand-binding). Interacts with SYK; activates PLCG1. Interacts with GRB2, LAT and THEMIS upon TCR activation in thymocytes. Interacts with TESPA1; the association is increased with prolonged stimulation of the TCR and may facilitate the assembly of the LAT signalosome. Interacts (via C-terminal proline-rich domain (PRD)) with PLCG1 (via SH3 domain); this interaction leads to guanine nucleotide exchange from PlCG1 to DNM1 and enhances DNM1-dependent endocytosis. (Microbial infection) Interacts (via SH3 domain) with HEV ORF3 protein. The cofactor is Ca(2+). In terms of processing, tyrosine phosphorylated in response to signaling via activated FLT3, KIT and PDGFRA. Tyrosine phosphorylated by activated FGFR1, FGFR2, FGFR3 and FGFR4. Tyrosine phosphorylated by activated FLT1 and KDR. Tyrosine phosphorylated by activated PDGFRB. The receptor-mediated activation of PLCG1 involves its phosphorylation by tyrosine kinases, in response to ligation of a variety of growth factor receptors and immune system receptors. For instance, SYK phosphorylates and activates PLCG1 in response to ligation of the B-cell receptor. May be dephosphorylated by PTPRJ. Phosphorylated by ITK and TXK on Tyr-783 upon TCR activation in T-cells. Post-translationally, ubiquitinated by CBLB in activated T-cells.

The protein resides in the cell projection. The protein localises to the lamellipodium. It is found in the ruffle. The enzyme catalyses a 1,2-diacyl-sn-glycero-3-phospho-(1D-myo-inositol-4,5-bisphosphate) + H2O = 1D-myo-inositol 1,4,5-trisphosphate + a 1,2-diacyl-sn-glycerol + H(+). The catalysed reaction is a 1,2-diacyl-sn-glycero-3-phospho-(1D-myo-inositol) + H2O = 1D-myo-inositol 1-phosphate + a 1,2-diacyl-sn-glycerol + H(+). With respect to regulation, activated by phosphorylation on tyrosine residues. Its function is as follows. Mediates the production of the second messenger molecules diacylglycerol (DAG) and inositol 1,4,5-trisphosphate (IP3). Plays an important role in the regulation of intracellular signaling cascades. Becomes activated in response to ligand-mediated activation of receptor-type tyrosine kinases, such as PDGFRA, PDGFRB, EGFR, FGFR1, FGFR2, FGFR3 and FGFR4. Plays a role in actin reorganization and cell migration. Guanine nucleotide exchange factor that binds the GTPase DNM1 and catalyzes the dissociation of GDP, allowing a GTP molecule to bind in its place, therefore enhancing DNM1-dependent endocytosis. This Homo sapiens (Human) protein is 1-phosphatidylinositol 4,5-bisphosphate phosphodiesterase gamma-1.